Here is a 384-residue protein sequence, read N- to C-terminus: S-adenosylmethionine synthase (384 aa).

Residue His-15 participates in ATP binding. Asp-17 is a binding site for Mg(2+). Glu-43 serves as a coordination point for K(+). Residues Glu-56 and Gln-99 each coordinate L-methionine. Residues Gln-99–Arg-109 form a flexible loop region. ATP is bound by residues Asp-164–Lys-166, Arg-230–Phe-231, Asp-239, Arg-245–Lys-246, Ala-262, and Lys-266. Asp-239 contacts L-methionine. Lys-270 is a binding site for L-methionine.

It belongs to the AdoMet synthase family. In terms of assembly, homotetramer; dimer of dimers. It depends on Mg(2+) as a cofactor. Requires K(+) as cofactor.

The protein resides in the cytoplasm. The enzyme catalyses L-methionine + ATP + H2O = S-adenosyl-L-methionine + phosphate + diphosphate. Its pathway is amino-acid biosynthesis; S-adenosyl-L-methionine biosynthesis; S-adenosyl-L-methionine from L-methionine: step 1/1. Catalyzes the formation of S-adenosylmethionine (AdoMet) from methionine and ATP. The overall synthetic reaction is composed of two sequential steps, AdoMet formation and the subsequent tripolyphosphate hydrolysis which occurs prior to release of AdoMet from the enzyme. The chain is S-adenosylmethionine synthase from Klebsiella pneumoniae (strain 342).